Here is a 37-residue protein sequence, read N- to C-terminus: Cytochrome b6-f complex subunit 5 (37 aa).

A helical membrane pass occupies residues 5-25 (LLCGIVLGLIPITLAGLFMAA).

This sequence belongs to the PetG family. The 4 large subunits of the cytochrome b6-f complex are cytochrome b6, subunit IV (17 kDa polypeptide, PetD), cytochrome f and the Rieske protein, while the 4 small subunits are PetG, PetL, PetM and PetN. The complex functions as a dimer.

Its subcellular location is the cellular thylakoid membrane. In terms of biological role, component of the cytochrome b6-f complex, which mediates electron transfer between photosystem II (PSII) and photosystem I (PSI), cyclic electron flow around PSI, and state transitions. PetG is required for either the stability or assembly of the cytochrome b6-f complex. The sequence is that of Cytochrome b6-f complex subunit 5 from Synechococcus elongatus (strain ATCC 33912 / PCC 7942 / FACHB-805) (Anacystis nidulans R2).